Here is a 1161-residue protein sequence, read N- to C-terminus: Nuclear pore complex-interacting protein family member B11 (1161 aa).

The chain crosses the membrane as a helical span at residues 63–87; sequence IIIAFPTSYKVVITLWIVYLWVSLL. Disordered stretches follow at residues 278–580 and 892–1161; these read ADDN…DDNI and SADD…RRLS. Pro residues predominate over residues 311–321; the sequence is PLPPSAPPSAP. Composition is skewed to basic and acidic residues over residues 368–378, 410–420, 452–462, 494–504, 536–546, 918–928, 960–970, 1002–1012, and 1044–1054; these read DNIKTTAERLR, DNIKTPAEHLR, DNIKTPAERLR, and DNIKTTAEHLR.

This sequence belongs to the NPIP family.

The protein resides in the membrane. The sequence is that of Nuclear pore complex-interacting protein family member B11 (NPIPB11) from Homo sapiens (Human).